The chain runs to 473 residues: Cysteine--tRNA ligase (473 aa).

Cys-28 contributes to the Zn(2+) binding site. Positions 30-40 (MTVYDYCHLGH) match the 'HIGH' region motif. Residues Cys-209, His-234, and Glu-238 each coordinate Zn(2+). The 'KMSKS' region motif lies at 282 to 286 (KMSKS). Lys-285 contacts ATP.

This sequence belongs to the class-I aminoacyl-tRNA synthetase family. As to quaternary structure, monomer. The cofactor is Zn(2+).

The protein localises to the cytoplasm. It catalyses the reaction tRNA(Cys) + L-cysteine + ATP = L-cysteinyl-tRNA(Cys) + AMP + diphosphate. This chain is Cysteine--tRNA ligase, found in Neisseria gonorrhoeae (strain ATCC 700825 / FA 1090).